A 185-amino-acid chain; its full sequence is Elongation factor P (185 aa).

Belongs to the elongation factor P family.

The protein resides in the cytoplasm. Its pathway is protein biosynthesis; polypeptide chain elongation. Its function is as follows. Involved in peptide bond synthesis. Stimulates efficient translation and peptide-bond synthesis on native or reconstituted 70S ribosomes in vitro. Probably functions indirectly by altering the affinity of the ribosome for aminoacyl-tRNA, thus increasing their reactivity as acceptors for peptidyl transferase. This Carboxydothermus hydrogenoformans (strain ATCC BAA-161 / DSM 6008 / Z-2901) protein is Elongation factor P.